The primary structure comprises 113 residues: Mitochondrial import protein 1 (113 aa).

A helical membrane pass occupies residues 39–62 (LVSFVGSCSINLLLPFLNGMMLGF).

Belongs to the MIM1 family. As to quaternary structure, component of the MIM complex containing at least MIM1 and MIM2. Interacts with MIM2; interaction is direct. Interacts with TOM70.

The protein resides in the mitochondrion outer membrane. Its function is as follows. Component of the MIM complex required for mitochondrial outer membrane protein import. The MIM complex cooperates with the receptor TOM70 in binding of precursor proteins and promotes their insertion and assembly into the outer membrane. Involved in import of the subset of proteins with multiple alpha-helical transmembrane segments, including UGO1. Required for the assembly of the TOM (translocase of outer membrane) receptor complex, which is responsible for the recognition and translocation of cytosolically synthesized mitochondrial preproteins. Required specifically for assembly of TOM40, TOM20, and TOM70, but not TOM22. In Saccharomyces cerevisiae (strain ATCC 204508 / S288c) (Baker's yeast), this protein is Mitochondrial import protein 1 (MIM1).